Consider the following 282-residue polypeptide: Large ribosomal subunit protein uL2c (282 aa).

The tract at residues 230-261 is disordered; sequence SAQNAVDHPHGGGEGKAPIGRIPSTPWGKPAL.

The protein belongs to the universal ribosomal protein uL2 family. Part of the 50S ribosomal subunit.

The protein localises to the plastid. The sequence is that of Large ribosomal subunit protein uL2c (rpl2) from Helicosporidium sp. subsp. Simulium jonesii (Green alga).